The sequence spans 203 residues: Signal peptidase I (203 aa).

The disordered stretch occupies residues methionine 1–serine 26. At methionine 1–lysine 33 the chain is on the cytoplasmic side. Residues proline 17–serine 26 show a composition bias toward low complexity. The chain crosses the membrane as a helical span at residues threonine 34 to alanine 50. Over glutamate 51 to tyrosine 203 the chain is Extracellular. Active-site residues include serine 59 and lysine 109.

Belongs to the peptidase S26 family.

It is found in the cell membrane. The enzyme catalyses Cleavage of hydrophobic, N-terminal signal or leader sequences from secreted and periplasmic proteins.. The polypeptide is Signal peptidase I (lepB) (Leptolyngbya laminosa (Phormidium laminosum)).